The chain runs to 533 residues: GMP synthase [glutamine-hydrolyzing] (533 aa).

Residues 25 to 215 form the Glutamine amidotransferase type-1 domain; that stretch reads SIVIFDFGSQ…VFNICKCHAN (191 aa). Residue C102 is the Nucleophile of the active site. Catalysis depends on residues H189 and E191. Positions 216–408 constitute a GMPS ATP-PPase domain; the sequence is WTMGNYIQES…LGLPDEMIWR (193 aa). Position 243-249 (243-249) interacts with ATP; it reads SGGVDSA.

As to quaternary structure, homodimer.

It catalyses the reaction XMP + L-glutamine + ATP + H2O = GMP + L-glutamate + AMP + diphosphate + 2 H(+). It functions in the pathway purine metabolism; GMP biosynthesis; GMP from XMP (L-Gln route): step 1/1. Its function is as follows. Catalyzes the synthesis of GMP from XMP. The sequence is that of GMP synthase [glutamine-hydrolyzing] from Dehalococcoides mccartyi (strain ATCC BAA-2266 / KCTC 15142 / 195) (Dehalococcoides ethenogenes (strain 195)).